Here is a 614-residue protein sequence, read N- to C-terminus: Zinc metalloproteinase-disintegrin-like protein H4 subunit A (614 aa).

A signal peptide spans 1–20 (MIQPLLVVTCLVVFPYQVSS). A propeptide spanning residues 21–193 (IILESGNVND…RKASQLVATS (173 aa)) is cleaved from the precursor. Glu-194 is modified (pyrrolidone carboxylic acid (Glu)). A Peptidase M12B domain is found at 201-397 (KYIELVIVVD…IKSKCIDNKP (197 aa)). Asn-220 is a glycosylation site (N-linked (GlcNAc...) asparagine). 17 cysteine pairs are disulfide-bonded: Cys-312/Cys-392, Cys-352/Cys-376, Cys-354/Cys-359, Cys-408/Cys-437, Cys-419/Cys-432, Cys-421/Cys-427, Cys-431/Cys-454, Cys-445/Cys-451, Cys-450/Cys-476, Cys-463/Cys-483, Cys-470/Cys-502, Cys-495/Cys-507, Cys-514/Cys-564, Cys-529/Cys-575, Cys-542/Cys-552, Cys-559/Cys-601, and Cys-595/Cys-607. His-337 contributes to the Zn(2+) binding site. The Metal-binding motif lies at 337 to 348 (HELGHNLGMDHD). The active-site Proton acceptor is the Glu-338. Positions 341 and 347 each coordinate Zn(2+). A Disintegrin domain is found at 405-491 (PAFCGNYFVE…ECPTDVLQRN (87 aa)). Ca(2+) is bound by residues Asn-410, Phe-412, Glu-414, Glu-417, and Asp-420. Asn-433 carries an N-linked (GlcNAc...) asparagine glycan. The D/ECD-tripeptide signature appears at 469–471 (ECD). Residues Asp-471 and Asp-486 each coordinate Ca(2+).

This sequence belongs to the venom metalloproteinase (M12B) family. P-III subfamily. As to quaternary structure, homodimer; disulfide-linked. Heterodimer of A and B subunits; disulfide-linked. The cofactor is Zn(2+). N-glycosylated. In terms of processing, the N-terminus is blocked. Expressed by the venom gland (at protein level). Expressed by the venom gland.

It is found in the secreted. With respect to regulation, the proteolytic activity of the heterodimer of A and B subunits requires Zn(2+) and Ca(2+) ions. Functionally, heterodimer (A and B subunits): Zinc metalloprotease that has fibrinogenolytic and hemorrhagic activities. Cleaves insulin B chain preferably at '40-Tyr-|-Leu-41' bond, but also at '28-Gln-|-His-29' and '34-His-|-Leu-35' bonds. Hydrolyzes effectively isolated extracellular matrix (ECM) bovine fibronectin, and only slightly, basal membrane (BM) proteins human collagen IV and murine laminin, in vitro. Cleaves nidogen-1 (at '350-Ser-|-Phe-351' and '380-Tyr-|-Asn-381' bonds), but not laminin, in a solubilized BM preparation. Hydrolyzes plasma proteins involved in blood coagulation in vitro. It slightly shortens prothrombin time and significantly prolongs thrombin time. Has potent alpha-fibrinogenase activity cleaving human fibrinogen alpha chain at '441-Glu-|-Leu-442' and '539-Glu-|-Phe-540' bonds, and to a lesser extent, beta chain at '52-Lys-|-Arg-53' and '48-Pro-|-Leu-49' bonds, but does not cleave gamma chain. Hydrolyzes bovine prothrombin at '200-Ser-|-Gly-201' bond, but does not activate it, however, it cleaves fragment 1 and prethrombin 1 from it. Hydrolyzes bovine factor X heavy chain, but the cleavage does not produce an activated factor Xa heavy chain. No hydrolysis or activation of plasminogen. The ability to degrade some of the ECM, BM and plasma proteins is likely the main contributor to its hemorrhagic activity. Inhibits platelet aggregation induced by collagen in vitro. Its binding to glycosaminoglycans (GAGs) may assist in concentrating it in the proximity of blood vessel walls enabling in vivo degradation of BM protein components. Cytotoxic to cultured HeLa cancer cells in a concentration- and time-dependent manner. In the solubilized BM preparation (Matrigel), it induces morphological changes in the HeLa cells and inhibits their adhesion, however, the viability of the cells is not reduced. The chain is Zinc metalloproteinase-disintegrin-like protein H4 subunit A from Vipera ammodytes ammodytes (Western sand viper).